Reading from the N-terminus, the 171-residue chain is Large ribosomal subunit protein uL10 (171 aa).

Belongs to the universal ribosomal protein uL10 family. In terms of assembly, part of the ribosomal stalk of the 50S ribosomal subunit. The N-terminus interacts with L11 and the large rRNA to form the base of the stalk. The C-terminus forms an elongated spine to which L12 dimers bind in a sequential fashion forming a multimeric L10(L12)X complex.

Forms part of the ribosomal stalk, playing a central role in the interaction of the ribosome with GTP-bound translation factors. This is Large ribosomal subunit protein uL10 from Nitrosomonas europaea (strain ATCC 19718 / CIP 103999 / KCTC 2705 / NBRC 14298).